The chain runs to 360 residues: DNA replication and repair protein RecF (360 aa).

Position 33-40 (33-40 (GENGSGKT)) interacts with ATP.

Belongs to the RecF family.

The protein resides in the cytoplasm. Its function is as follows. The RecF protein is involved in DNA metabolism; it is required for DNA replication and normal SOS inducibility. RecF binds preferentially to single-stranded, linear DNA. It also seems to bind ATP. The protein is DNA replication and repair protein RecF of Rickettsia canadensis (strain McKiel).